The primary structure comprises 49 residues: Single-stranded DNA-binding protein (49 aa).

In terms of assembly, homodimer in the absence of DNA, monomer when binding DNA.

Functionally, binds preferentially to single-stranded DNA and therefore, destabilizes double-stranded DNA. It is involved in DNA replication, repair and recombination. Binds ss-DNA as the replication fork advances and stimulates the replisome processivity and accuracy. This Enterobacteria phage RB9 (Bacteriophage RB9) protein is Single-stranded DNA-binding protein (32).